The primary structure comprises 82 residues: Small ribosomal subunit protein bS16 (82 aa).

It belongs to the bacterial ribosomal protein bS16 family.

This chain is Small ribosomal subunit protein bS16, found in Pasteurella multocida (strain Pm70).